A 98-amino-acid polypeptide reads, in one-letter code: NADH-ubiquinone oxidoreductase chain 4L (98 aa).

A run of 3 helical transmembrane segments spans residues 1–21 (MSLV…GLLM), 29–49 (SLLC…LMIL), and 61–81 (IILL…LVMV).

Belongs to the complex I subunit 4L family. As to quaternary structure, core subunit of respiratory chain NADH dehydrogenase (Complex I) which is composed of 45 different subunits.

It is found in the mitochondrion inner membrane. The catalysed reaction is a ubiquinone + NADH + 5 H(+)(in) = a ubiquinol + NAD(+) + 4 H(+)(out). Core subunit of the mitochondrial membrane respiratory chain NADH dehydrogenase (Complex I) which catalyzes electron transfer from NADH through the respiratory chain, using ubiquinone as an electron acceptor. Part of the enzyme membrane arm which is embedded in the lipid bilayer and involved in proton translocation. This chain is NADH-ubiquinone oxidoreductase chain 4L (MT-ND4L), found in Pantholops hodgsonii (Chiru).